We begin with the raw amino-acid sequence, 308 residues long: MEIILAEPRGFCAGVKRAVDILAITLEKYKNERQVYVLHEIVHNKYIVEGFKKQGVVFVSSIEDIKDNRGILIFSAHGVSKSIEDEAKRKGVQVIDATCPLVSKVHKEAKRYEDSGKELILIGHENHPEVKGIIGRVSNPISLVQTMQDVYNLQIKDPDNLSYVTQTTLSIDDTKEIIATLKLRFPSITGPDLKDICYATQNRQNAVKKLAKITDVVLIVGSKNSSNSNRLLDLCISTGKRAYLIDNYKCMNKNWLQGAEKIGITAGASAPDILVDELVNYLKINMNTKVSVMPDGFTENVQFKYTKW.

Cysteine 12 is a [4Fe-4S] cluster binding site. (2E)-4-hydroxy-3-methylbut-2-enyl diphosphate is bound by residues histidine 43 and histidine 77. The dimethylallyl diphosphate site is built by histidine 43 and histidine 77. Residues histidine 43 and histidine 77 each coordinate isopentenyl diphosphate. Cysteine 99 lines the [4Fe-4S] cluster pocket. Histidine 127 is a (2E)-4-hydroxy-3-methylbut-2-enyl diphosphate binding site. Residue histidine 127 coordinates dimethylallyl diphosphate. Isopentenyl diphosphate is bound at residue histidine 127. The active-site Proton donor is glutamate 129. Residue threonine 167 participates in (2E)-4-hydroxy-3-methylbut-2-enyl diphosphate binding. [4Fe-4S] cluster is bound at residue cysteine 197. (2E)-4-hydroxy-3-methylbut-2-enyl diphosphate contacts are provided by serine 225, serine 226, asparagine 227, and serine 269. Dimethylallyl diphosphate contacts are provided by serine 225, serine 226, asparagine 227, and serine 269. Residues serine 225, serine 226, asparagine 227, and serine 269 each coordinate isopentenyl diphosphate.

It belongs to the IspH family. Requires [4Fe-4S] cluster as cofactor.

It catalyses the reaction isopentenyl diphosphate + 2 oxidized [2Fe-2S]-[ferredoxin] + H2O = (2E)-4-hydroxy-3-methylbut-2-enyl diphosphate + 2 reduced [2Fe-2S]-[ferredoxin] + 2 H(+). The enzyme catalyses dimethylallyl diphosphate + 2 oxidized [2Fe-2S]-[ferredoxin] + H2O = (2E)-4-hydroxy-3-methylbut-2-enyl diphosphate + 2 reduced [2Fe-2S]-[ferredoxin] + 2 H(+). It participates in isoprenoid biosynthesis; dimethylallyl diphosphate biosynthesis; dimethylallyl diphosphate from (2E)-4-hydroxy-3-methylbutenyl diphosphate: step 1/1. Its pathway is isoprenoid biosynthesis; isopentenyl diphosphate biosynthesis via DXP pathway; isopentenyl diphosphate from 1-deoxy-D-xylulose 5-phosphate: step 6/6. Functionally, catalyzes the conversion of 1-hydroxy-2-methyl-2-(E)-butenyl 4-diphosphate (HMBPP) into a mixture of isopentenyl diphosphate (IPP) and dimethylallyl diphosphate (DMAPP). Acts in the terminal step of the DOXP/MEP pathway for isoprenoid precursor biosynthesis. This Wolbachia pipientis subsp. Culex pipiens (strain wPip) protein is 4-hydroxy-3-methylbut-2-enyl diphosphate reductase.